Reading from the N-terminus, the 69-residue chain is Large ribosomal subunit protein bL31 (69 aa).

Residues cysteine 16, cysteine 18, cysteine 36, and cysteine 39 each contribute to the Zn(2+) site.

This sequence belongs to the bacterial ribosomal protein bL31 family. Type A subfamily. Part of the 50S ribosomal subunit. It depends on Zn(2+) as a cofactor.

Its function is as follows. Binds the 23S rRNA. This is Large ribosomal subunit protein bL31 from Thermosipho africanus (strain TCF52B).